A 299-amino-acid polypeptide reads, in one-letter code: Tyrosine recombinase XerD (299 aa).

Positions 2 to 89 constitute a Core-binding (CB) domain; the sequence is ETVNNNLQQF…AIRSFHQFLL (88 aa). The Tyr recombinase domain maps to 110–293; the sequence is RLPKALTIEE…TKTRMRDVYA (184 aa). Catalysis depends on residues arginine 150, lysine 174, histidine 245, arginine 248, and histidine 271. The active-site O-(3'-phospho-DNA)-tyrosine intermediate is tyrosine 280.

It belongs to the 'phage' integrase family. XerD subfamily. As to quaternary structure, forms a cyclic heterotetrameric complex composed of two molecules of XerC and two molecules of XerD.

The protein resides in the cytoplasm. In terms of biological role, site-specific tyrosine recombinase, which acts by catalyzing the cutting and rejoining of the recombining DNA molecules. The XerC-XerD complex is essential to convert dimers of the bacterial chromosome into monomers to permit their segregation at cell division. It also contributes to the segregational stability of plasmids. The protein is Tyrosine recombinase XerD of Halalkalibacterium halodurans (strain ATCC BAA-125 / DSM 18197 / FERM 7344 / JCM 9153 / C-125) (Bacillus halodurans).